Reading from the N-terminus, the 335-residue chain is MKIQFAPHNVPFERRLQTAAVLQWVFSFLALAQTCILLFFVLLFTRFWIISVVYGVWWFLDWDTPSKGGRRGEWLRRHVIWTYMKDYFPITLVKTADLDPQQNYVVGSHPHGVLVAGAFTNFCTEATGFHRLFPGITPYLLMLPLWFRAPFFRDYIMSGGLIPSDKDSASYLLKNKAGGNAVVIAVGGAPESLDARPGAFTLLIKNRKGFVRLAILHGASLVPVFSFGENELFDQVDNPRGSWLRKIQEKLQKMMGVALPLFHARGVFQYSFGLIPYRKPIATIVGKPIRVEENPNPSSEEVDKLHKIYMEELSKLFEEHKTKYNVPADKHLTFV.

A run of 2 helical transmembrane segments spans residues 24–44 (WVFSFLALAQTCILLFFVLLF) and 47–67 (FWIISVVYGVWWFLDWDTPSK).

Belongs to the diacylglycerol acyltransferase family.

It is found in the endoplasmic reticulum membrane. The protein localises to the cytoplasm. The protein resides in the perinuclear region. It catalyses the reaction a 2-acylglycerol + an acyl-CoA = a 1,2-diacylglycerol + CoA. The catalysed reaction is a 2-acylglycerol + an acyl-CoA = a 1,2-diacyl-sn-glycerol + CoA. It carries out the reaction a 2-acylglycerol + an acyl-CoA = a 2,3-diacyl-sn-glycerol + CoA. The enzyme catalyses a 1-acylglycerol + an acyl-CoA = a 1,2-diacylglycerol + CoA. It catalyses the reaction a 1-acylglycerol + an acyl-CoA = a 1,3-diacylglycerol + CoA. The catalysed reaction is 1-O-alkylglycerol + an acyl-CoA = 1-O-alkyl-3-acylglycerol + CoA. It carries out the reaction an acyl-CoA + a 1,2-diacyl-sn-glycerol = a triacyl-sn-glycerol + CoA. The protein operates within glycerolipid metabolism; triacylglycerol biosynthesis. In terms of biological role, catalyzes the formation of diacylglycerol from 2-monoacylglycerol and fatty acyl-CoA. Its function is as follows. Involved in glycerolipid synthesis and lipid metabolism. Catalyzes the formation of diacylglycerol, the precursor of triacylglycerol, by transferring the acyl chain of a fatty acyl-CoA to a monoacylglycerol. Plays a central role in absorption of dietary fat in the small intestine by catalyzing the resynthesis of triacylglycerol in enterocytes. Has a preference toward monoacylglycerols containing unsaturated fatty acids in an order of C18:3 &gt; C18:2 &gt; C18:1 &gt; C18:0 at sn-2. Able to use 1-monoalkylglycerol (1-MAkG, 1-O-alkylglycerol) as an acyl acceptor for the synthesis of monoalkyl-monoacylglycerol (MAMAG, 1-O-alkyl-3-acylglycerol or 1-O-alkyl-2-acylglycerol) and subsequently, with lower efficiency, may add another acyl chain producing monoalkyl-diacylglycerol (MADAG, 1-O-alkyl-2,3-diacylglycerol). Possesses weak but significant activity with diacylglycerol as substrate, producing triacylglycerol (triacyl-sn-glycerol). This is 2-acylglycerol O-acyltransferase 2-A (mogat2-a) from Xenopus laevis (African clawed frog).